The primary structure comprises 374 residues: Outer membrane protein assembly factor BamC (374 aa).

The signal sequence occupies residues 1 to 22 (MSKFYKSGRVTTAVIVALSLSA). Cys-23 is lipidated: N-palmitoyl cysteine. The S-diacylglycerol cysteine moiety is linked to residue Cys-23.

It belongs to the BamC family. As to quaternary structure, part of the Bam complex.

Its subcellular location is the cell outer membrane. Functionally, part of the outer membrane protein assembly complex, which is involved in assembly and insertion of beta-barrel proteins into the outer membrane. The protein is Outer membrane protein assembly factor BamC of Psychromonas ingrahamii (strain DSM 17664 / CCUG 51855 / 37).